We begin with the raw amino-acid sequence, 156 residues long: Large ribosomal subunit protein uL15 (156 aa).

The segment at 25–48 (RGIGCGKGKTSGRGHKGQKARSGV) is disordered. Residues 34 to 43 (TSGRGHKGQK) show a composition bias toward basic residues.

This sequence belongs to the universal ribosomal protein uL15 family. Part of the 50S ribosomal subunit.

Binds to the 23S rRNA. The sequence is that of Large ribosomal subunit protein uL15 from Wolbachia pipientis subsp. Culex pipiens (strain wPip).